We begin with the raw amino-acid sequence, 452 residues long: Retinoid-inducible serine carboxypeptidase (452 aa).

The N-terminal stretch at 1–28 (MELSRRICLVRLWLLLLSFLLGFSAGSA) is a signal peptide. N-linked (GlcNAc...) asparagine glycosylation is found at N64, N102, and N126. Residue S167 is part of the active site. N192 and N362 each carry an N-linked (GlcNAc...) asparagine glycan. Residues D371 and H431 contribute to the active site.

Belongs to the peptidase S10 family. In terms of tissue distribution, highly expressed in aorta, bladder, and kidney with much lower levels in all other tissues analyzed. Expression in kidney is restricted to proximal convoluted tubules.

Its subcellular location is the secreted. May be involved in vascular wall and kidney homeostasis. This Rattus norvegicus (Rat) protein is Retinoid-inducible serine carboxypeptidase (Scpep1).